We begin with the raw amino-acid sequence, 299 residues long: 4-diphosphocytidyl-2-C-methyl-D-erythritol kinase (299 aa).

Lysine 18 is an active-site residue. Residue 104–114 (PIASGIGGGSS) coordinates ATP. Residue aspartate 146 is part of the active site.

It belongs to the GHMP kinase family. IspE subfamily.

It carries out the reaction 4-CDP-2-C-methyl-D-erythritol + ATP = 4-CDP-2-C-methyl-D-erythritol 2-phosphate + ADP + H(+). It functions in the pathway isoprenoid biosynthesis; isopentenyl diphosphate biosynthesis via DXP pathway; isopentenyl diphosphate from 1-deoxy-D-xylulose 5-phosphate: step 3/6. In terms of biological role, catalyzes the phosphorylation of the position 2 hydroxy group of 4-diphosphocytidyl-2C-methyl-D-erythritol. This Brucella abortus biovar 1 (strain 9-941) protein is 4-diphosphocytidyl-2-C-methyl-D-erythritol kinase.